Reading from the N-terminus, the 475-residue chain is Ribulose bisphosphate carboxylase large chain (475 aa).

Residues 1–2 constitute a propeptide that is removed on maturation; sequence MS. Residue P3 is modified to N-acetylproline. K14 carries the post-translational modification N6,N6,N6-trimethyllysine. Substrate is bound by residues N123 and T173. The active-site Proton acceptor is K175. K177 lines the substrate pocket. 3 residues coordinate Mg(2+): K201, D203, and E204. At K201 the chain carries N6-carboxylysine. Residue H294 is the Proton acceptor of the active site. 3 residues coordinate substrate: R295, H327, and S379.

It belongs to the RuBisCO large chain family. Type I subfamily. As to quaternary structure, heterohexadecamer of 8 large chains and 8 small chains; disulfide-linked. The disulfide link is formed within the large subunit homodimers. Requires Mg(2+) as cofactor. Post-translationally, the disulfide bond which can form in the large chain dimeric partners within the hexadecamer appears to be associated with oxidative stress and protein turnover.

The protein resides in the plastid. It is found in the chloroplast. It catalyses the reaction 2 (2R)-3-phosphoglycerate + 2 H(+) = D-ribulose 1,5-bisphosphate + CO2 + H2O. The enzyme catalyses D-ribulose 1,5-bisphosphate + O2 = 2-phosphoglycolate + (2R)-3-phosphoglycerate + 2 H(+). In terms of biological role, ruBisCO catalyzes two reactions: the carboxylation of D-ribulose 1,5-bisphosphate, the primary event in carbon dioxide fixation, as well as the oxidative fragmentation of the pentose substrate in the photorespiration process. Both reactions occur simultaneously and in competition at the same active site. The chain is Ribulose bisphosphate carboxylase large chain from Anthoceros angustus (Hornwort).